We begin with the raw amino-acid sequence, 545 residues long: Chaperonin GroEL (545 aa).

Residues 29–32 (TLGP), K50, 86–90 (DGTTT), G415, and D495 each bind ATP.

It belongs to the chaperonin (HSP60) family. Forms a cylinder of 14 subunits composed of two heptameric rings stacked back-to-back. Interacts with the co-chaperonin GroES.

It localises to the cytoplasm. It carries out the reaction ATP + H2O + a folded polypeptide = ADP + phosphate + an unfolded polypeptide.. Functionally, together with its co-chaperonin GroES, plays an essential role in assisting protein folding. The GroEL-GroES system forms a nano-cage that allows encapsulation of the non-native substrate proteins and provides a physical environment optimized to promote and accelerate protein folding. The protein is Chaperonin GroEL of Porphyromonas gingivalis (strain ATCC BAA-308 / W83).